The following is a 482-amino-acid chain: Membrane-bound lytic murein transglycosylase F (482 aa).

A signal peptide spans 1–18; it reads MKGLFLRIITALALLFWA. A non-LT domain region spans residues 19-267; that stretch reads IDMVFPWQFL…NLKEKYLGHI (249 aa). Residues 268-482 are LT domain; sequence SQFDYVDTRS…NLEEIKENKD (215 aa). Glutamate 312 is a catalytic residue. Over residues 457-470 the composition is skewed to polar residues; it reads ENQTTNDNANNESA. Positions 457 to 482 are disordered; sequence ENQTTNDNANNESAVKNLEEIKENKD. Residues 473-482 are compositionally biased toward basic and acidic residues; it reads NLEEIKENKD.

This sequence in the N-terminal section; belongs to the bacterial solute-binding protein 3 family. It in the C-terminal section; belongs to the transglycosylase Slt family.

It is found in the cell outer membrane. The catalysed reaction is Exolytic cleavage of the (1-&gt;4)-beta-glycosidic linkage between N-acetylmuramic acid (MurNAc) and N-acetylglucosamine (GlcNAc) residues in peptidoglycan, from either the reducing or the non-reducing ends of the peptidoglycan chains, with concomitant formation of a 1,6-anhydrobond in the MurNAc residue.. Functionally, murein-degrading enzyme that degrades murein glycan strands and insoluble, high-molecular weight murein sacculi, with the concomitant formation of a 1,6-anhydromuramoyl product. Lytic transglycosylases (LTs) play an integral role in the metabolism of the peptidoglycan (PG) sacculus. Their lytic action creates space within the PG sacculus to allow for its expansion as well as for the insertion of various structures such as secretion systems and flagella. This Haemophilus influenzae (strain 86-028NP) protein is Membrane-bound lytic murein transglycosylase F.